A 166-amino-acid chain; its full sequence is NAD(P)H-quinone oxidoreductase subunit I, chloroplastic (166 aa).

2 consecutive 4Fe-4S ferredoxin-type domains span residues Gly55–Lys84 and Leu95–Glu124. 8 residues coordinate [4Fe-4S] cluster: Cys64, Cys67, Cys70, Cys74, Cys104, Cys107, Cys110, and Cys114.

It belongs to the complex I 23 kDa subunit family. In terms of assembly, NDH is composed of at least 16 different subunits, 5 of which are encoded in the nucleus. It depends on [4Fe-4S] cluster as a cofactor.

The protein resides in the plastid. It is found in the chloroplast thylakoid membrane. The catalysed reaction is a plastoquinone + NADH + (n+1) H(+)(in) = a plastoquinol + NAD(+) + n H(+)(out). It carries out the reaction a plastoquinone + NADPH + (n+1) H(+)(in) = a plastoquinol + NADP(+) + n H(+)(out). Functionally, NDH shuttles electrons from NAD(P)H:plastoquinone, via FMN and iron-sulfur (Fe-S) centers, to quinones in the photosynthetic chain and possibly in a chloroplast respiratory chain. The immediate electron acceptor for the enzyme in this species is believed to be plastoquinone. Couples the redox reaction to proton translocation, and thus conserves the redox energy in a proton gradient. The chain is NAD(P)H-quinone oxidoreductase subunit I, chloroplastic from Chamaechaenactis scaposa (Fullstem).